A 1578-amino-acid polypeptide reads, in one-letter code: Cilia- and flagella-associated protein 74 (1578 aa).

Residues 1–14 (MEEPTVQFSDEDLV) are compositionally biased toward acidic residues. 2 disordered regions span residues 1–21 (MEEP…PPMD) and 33–67 (EVER…TTKD). Basic and acidic residues predominate over residues 33–65 (EVERPSEGLEDEGSHSSAKKESKGAEKMRKSTT). Coiled-coil stretches lie at residues 103 to 156 (RQRM…QSKI) and 330 to 378 (KYLF…RRQH).

The protein belongs to the CFAP74 family.

It localises to the cytoplasm. It is found in the cytoskeleton. The protein localises to the cilium axoneme. The protein resides in the flagellum axoneme. Its function is as follows. As part of the central apparatus of the cilium axoneme may play a role in cilium movement. May play an important role in sperm architecture and function. The sequence is that of Cilia- and flagella-associated protein 74 from Mus musculus (Mouse).